Consider the following 648-residue polypeptide: Primary amine oxidase (648 aa).

Residues 1–9 (MTLNAESEA) constitute a propeptide that is removed on maturation. Residue 299–310 (AFDSGEYNIGNM) coordinates substrate. Aspartate 301 acts as the Proton acceptor in catalysis. The cysteines at positions 320 and 346 are disulfide-linked. 382 to 387 (VANYEY) lines the substrate pocket. Tyrosine 385 serves as the catalytic Schiff-base intermediate with substrate; via topaquinone. Tyrosine 385 carries the post-translational modification 2',4',5'-topaquinone. Cu cation-binding residues include histidine 436 and histidine 438. Positions 445, 446, and 584 each coordinate Mn(2+). A Cu cation-binding site is contributed by histidine 595.

The protein belongs to the copper/topaquinone oxidase family. As to quaternary structure, homodimer. The cofactor is Cu cation. Requires Zn(2+) as cofactor. L-topaquinone serves as cofactor. It depends on Mn(2+) as a cofactor. Post-translationally, topaquinone (TPQ) is generated by copper-dependent autoxidation of a specific tyrosyl residue.

The catalysed reaction is a primary methyl amine + O2 + H2O = an aldehyde + H2O2 + NH4(+). Functionally, the exact function of MaoXI is not known. The chain is Primary amine oxidase (maoI) from Arthrobacter sp. (strain P1).